We begin with the raw amino-acid sequence, 294 residues long: Endolytic peptidoglycan transglycosylase RlpA (294 aa).

Positions 1–23 (MKQKIFQILTALCCIFYVMSAQA) are cleaved as a signal peptide. One can recognise an SPOR domain in the interval 216–291 (EKYTTVYKIR…NYSKPLIVYT (76 aa)).

The protein belongs to the RlpA family.

Functionally, lytic transglycosylase with a strong preference for naked glycan strands that lack stem peptides. The sequence is that of Endolytic peptidoglycan transglycosylase RlpA from Pasteurella multocida (strain Pm70).